Reading from the N-terminus, the 319-residue chain is Formimidoylglutamase (319 aa).

Residues asparagine 127, aspartate 150, histidine 152, aspartate 154, aspartate 242, and aspartate 244 each coordinate Mn(2+).

The protein belongs to the arginase family. Mn(2+) is required as a cofactor.

It carries out the reaction N-formimidoyl-L-glutamate + H2O = formamide + L-glutamate. The protein operates within amino-acid degradation; L-histidine degradation into L-glutamate; L-glutamate from N-formimidoyl-L-glutamate (hydrolase route): step 1/1. Catalyzes the conversion of N-formimidoyl-L-glutamate to L-glutamate and formamide. This chain is Formimidoylglutamase, found in Bacillus subtilis (strain 168).